A 354-amino-acid polypeptide reads, in one-letter code: Chorismate synthase (354 aa).

Arginine 48 is an NADP(+) binding site. Residues arginine 125–serine 127, glycine 277, lysine 292–serine 296, and arginine 318 each bind FMN.

Belongs to the chorismate synthase family. Homotetramer. It depends on FMNH2 as a cofactor.

It catalyses the reaction 5-O-(1-carboxyvinyl)-3-phosphoshikimate = chorismate + phosphate. It participates in metabolic intermediate biosynthesis; chorismate biosynthesis; chorismate from D-erythrose 4-phosphate and phosphoenolpyruvate: step 7/7. Catalyzes the anti-1,4-elimination of the C-3 phosphate and the C-6 proR hydrogen from 5-enolpyruvylshikimate-3-phosphate (EPSP) to yield chorismate, which is the branch point compound that serves as the starting substrate for the three terminal pathways of aromatic amino acid biosynthesis. This reaction introduces a second double bond into the aromatic ring system. The protein is Chorismate synthase of Nitratidesulfovibrio vulgaris (strain DP4) (Desulfovibrio vulgaris).